The chain runs to 257 residues: MLIIDIGNTNIKFGICINNQIIQTLRISSQPRRTADEYFFFLNTMRNQLNTNNFTITHIIISSVVPSITKPMIELSTHYFNITPTIINNQHADICNIKIDLNDKLLGSDRLASIIGAVTLYPNKNLLVISMGTATVFNLISKERSIYGQVITPGAHIMAQSMRQHTALLPEISQIKVNKVVHNTLFYAIEAGVYWGYIAMVEGIVKQILHEENKDLHIVATGGNSILFIDHKNFIKNIDPDLTMKGMIYLHNMLFNK.

An ATP-binding site is contributed by aspartate 5–lysine 12. A substrate-binding site is contributed by glycine 107–arginine 110. Aspartate 109 serves as the catalytic Proton acceptor. Position 133 (threonine 133) interacts with ATP.

It belongs to the type III pantothenate kinase family. In terms of assembly, homodimer. It depends on NH4(+) as a cofactor. K(+) serves as cofactor.

The protein localises to the cytoplasm. It catalyses the reaction (R)-pantothenate + ATP = (R)-4'-phosphopantothenate + ADP + H(+). The protein operates within cofactor biosynthesis; coenzyme A biosynthesis; CoA from (R)-pantothenate: step 1/5. In terms of biological role, catalyzes the phosphorylation of pantothenate (Pan), the first step in CoA biosynthesis. The chain is Type III pantothenate kinase from Ehrlichia ruminantium (strain Gardel).